Reading from the N-terminus, the 881-residue chain is Sodium/potassium/calcium exchanger Nckx30C (881 aa).

Residues 1–194 (MLQPTTCSKQ…SRCRSRRCLR (194 aa)) are Extracellular-facing. Asn-69 carries N-linked (GlcNAc...) asparagine glycosylation. Disordered regions lie at residues 79-111 (DMLSAGRSRSSSTTIDFNSRRRRGRLRGHAPSD), 149-181 (AKTRSRTAAQLPATSAASATSSRGASAEQLLHP), 215-255 (AAKP…TSGE), and 272-315 (GLEE…TTKT). Over residues 85 to 95 (RSRSSSTTIDF) the composition is skewed to polar residues. Residues 149 to 175 (AKTRSRTAAQLPATSAASATSSRGASA) show a composition bias toward low complexity. Residues 195–215 (LPIYSILLLCLTTQGLGLGDA) form a helical membrane-spanning segment. Over 216 to 330 (AKPRPAKQHF…DLFTKEQLEN (115 aa)) the chain is Cytoplasmic. The span at 228-240 (SNSNSPNQNQNHN) shows a compositional bias: low complexity. Positions 296–315 (AGNQRGINDTHNDNSTTTKT) are enriched in polar residues. Residues 331–351 (GAVILHIIGVIYMFVALAIVC) traverse the membrane as a helical segment. Over 352 to 375 (DEFFVPSLDVIIEKLGITDDVAGA) the chain is Extracellular. The Alpha-1 repeat unit spans residues 372 to 412 (VAGATFMAAGGSAPELFTSVIGVFVSFDDVGIGTIVGSAVF). The chain crosses the membrane as a helical span at residues 376-396 (TFMAAGGSAPELFTSVIGVFV). Residues 397–402 (SFDDVG) lie on the Cytoplasmic side of the membrane. Residues 403–423 (IGTIVGSAVFNILFVIGMCAL) form a helical membrane-spanning segment. The Extracellular segment spans residues 424–433 (FSKTVLSLTW). The helical transmembrane segment at 434-454 (WPLFRDCSFYSISLLVLIYFF) threads the bilayer. Topologically, residues 455–458 (RDNR) are cytoplasmic. The helical transmembrane segment at 459-479 (IFWWEALILFTIYIGYVAFMK) threads the bilayer. At 480-720 (WNVQVETCVK…PDTRTPRGKR (241 aa)) the chain is on the extracellular side. Positions 508 to 565 (PAGNAANSSETSMATQPGGSVTSRAASETRSGPPGSSNAGATGNSSGGGGTSGSTQTG) are disordered. Residues 512–537 (AANSSETSMATQPGGSVTSRAASETR) show a composition bias toward polar residues. N-linked (GlcNAc...) asparagine glycans are attached at residues Asn-514 and Asn-551. The span at 542–551 (GSSNAGATGN) shows a compositional bias: low complexity. A helical transmembrane segment spans residues 721–741 (FFPVTFIGSIVWIAAFSYLMV). The Cytoplasmic segment spans residues 742–756 (WWANVAGDTARIPPE). The chain crosses the membrane as a helical span at residues 757-777 (VMGLTFLAAGTSIPDLITSVI). An Alpha-2 repeat occupies 764–795 (AAGTSIPDLITSVIVARKGFGDMAVSSSVGSN). At 778-795 (VARKGFGDMAVSSSVGSN) the chain is on the extracellular side. Residues 796-816 (IFDVTVGLPIPWLLYGIIYGA) form a helical membrane-spanning segment. Residues 817–822 (PVEVNS) are Cytoplasmic-facing. The chain crosses the membrane as a helical span at residues 823-843 (VGMVCSITILFMMLVFVVMSI). At 844 to 852 (ACFRWRMNK) the chain is on the extracellular side. A helical membrane pass occupies residues 853-873 (GLGFTMFLLYFAFVAVSLMFE). Over 874–881 (YDVITCPF) the chain is Cytoplasmic.

The protein belongs to the Ca(2+):cation antiporter (CaCA) (TC 2.A.19) family. SLC24A subfamily. In terms of tissue distribution, expressed in the adult nervous system. Expressed in the photoreceptor cells as well as in the lamina, medulla, and optic lobes of the brain.

The protein resides in the membrane. Its function is as follows. May function in the removal and maintenance of calcium homeostasis during signaling in the adult and in signaling events during embryogenesis and patterning of imaginal disks. Transports one Ca(2+) and 1 K(+) in exchange for 4 Na(+). This chain is Sodium/potassium/calcium exchanger Nckx30C (Nckx30C), found in Drosophila melanogaster (Fruit fly).